The primary structure comprises 320 residues: Phosphate acyltransferase (320 aa).

The protein belongs to the PlsX family. As to quaternary structure, homodimer. Probably interacts with PlsY.

The protein localises to the cytoplasm. The catalysed reaction is a fatty acyl-[ACP] + phosphate = an acyl phosphate + holo-[ACP]. Its pathway is lipid metabolism; phospholipid metabolism. In terms of biological role, catalyzes the reversible formation of acyl-phosphate (acyl-PO(4)) from acyl-[acyl-carrier-protein] (acyl-ACP). This enzyme utilizes acyl-ACP as fatty acyl donor, but not acyl-CoA. This Syntrophomonas wolfei subsp. wolfei (strain DSM 2245B / Goettingen) protein is Phosphate acyltransferase.